The chain runs to 275 residues: NH(3)-dependent NAD(+) synthetase (275 aa).

50 to 57 lines the ATP pocket; sequence GISGGVDS. D56 contacts Mg(2+). R147 provides a ligand contact to deamido-NAD(+). T167 is a binding site for ATP. Mg(2+) is bound at residue E172. Residues K180 and D187 each contribute to the deamido-NAD(+) site. The ATP site is built by K196 and T218. Residue 267 to 268 participates in deamido-NAD(+) binding; that stretch reads HK.

This sequence belongs to the NAD synthetase family. Homodimer.

The catalysed reaction is deamido-NAD(+) + NH4(+) + ATP = AMP + diphosphate + NAD(+) + H(+). The protein operates within cofactor biosynthesis; NAD(+) biosynthesis; NAD(+) from deamido-NAD(+) (ammonia route): step 1/1. Functionally, catalyzes the ATP-dependent amidation of deamido-NAD to form NAD. Uses ammonia as a nitrogen source. The sequence is that of NH(3)-dependent NAD(+) synthetase from Pseudomonas putida (strain ATCC 700007 / DSM 6899 / JCM 31910 / BCRC 17059 / LMG 24140 / F1).